The chain runs to 288 residues: ATP synthase gamma chain (288 aa).

The protein belongs to the ATPase gamma chain family. In terms of assembly, F-type ATPases have 2 components, CF(1) - the catalytic core - and CF(0) - the membrane proton channel. CF(1) has five subunits: alpha(3), beta(3), gamma(1), delta(1), epsilon(1). CF(0) has three main subunits: a, b and c.

The protein resides in the cell inner membrane. Functionally, produces ATP from ADP in the presence of a proton gradient across the membrane. The gamma chain is believed to be important in regulating ATPase activity and the flow of protons through the CF(0) complex. In Aeromonas hydrophila subsp. hydrophila (strain ATCC 7966 / DSM 30187 / BCRC 13018 / CCUG 14551 / JCM 1027 / KCTC 2358 / NCIMB 9240 / NCTC 8049), this protein is ATP synthase gamma chain.